Reading from the N-terminus, the 126-residue chain is DNA-directed RNA polymerase I subunit RPA12 (126 aa).

6 residues coordinate Zn(2+): cysteine 20, cysteine 23, cysteine 38, cysteine 41, cysteine 87, and cysteine 90. The C4-type zinc finger occupies 20 to 41; it reads CSDCGSVLPLPGAQDTVTCTRC. The TFIIS-type zinc finger occupies 83–123; sequence VDRRCPRCGHEGMAYHTRQMRSADEGQTVFYTCTNCKFQEK. Positions 106-107 match the Hairpin motif; the sequence is DE. Cysteine 115 and cysteine 118 together coordinate Zn(2+).

The protein belongs to the archaeal RpoM/eukaryotic RPA12/RPB9/RPC11 RNA polymerase family. Component of the RNA polymerase I (Pol I) complex consisting of 13 subunits: a ten-subunit catalytic core composed of POLR1A/RPA1, POLR1B/RPA2, POLR1C/RPAC1, POLR1D/RPAC2, POLR1H/RPA12, POLR2E/RPABC1, POLR2F/RPABC2, POLR2H/RPABC3, POLR2K/RPABC4 and POLR2L/RPABC5; a mobile stalk subunit POLR1F/RPA43 protruding from the core and additional subunits homologous to general transcription factors POLR1E/RPA49 and POLR1G/RPA34. Part of Pol I pre-initiation complex (PIC), in which Pol I core assembles with RRN3 and promoter-bound UTBF and SL1/TIF-IB complex.

It is found in the nucleus. Its subcellular location is the nucleolus. Core component of RNA polymerase I (Pol I), a DNA-dependent RNA polymerase which synthesizes ribosomal RNA precursors using the four ribonucleoside triphosphates as substrates. Can mediate Pol I proofreading of the nascent RNA transcript. Anchors into the Pol I active site to monitor transcription fidelity and cleave mis-incorporated 5'-ribonucleotides. This is DNA-directed RNA polymerase I subunit RPA12 from Macaca mulatta (Rhesus macaque).